We begin with the raw amino-acid sequence, 947 residues long: MTPLSSPLSQYWQTIVERLPEGFTETSLSVQAKSVLTFSDFALDSVIAHPEWLAELESASPQADEWRHYAGWLQEALAGVCDDASLMRELRFFRRRIMVRIAWAQTLSLVDDETILQQLSHLAETLIVGARDWLYAACCREWGTPCNPQGVPQPLLILGMGKLGGGELNFSSDIDLIFAWPEHGETRGGRRELDNAQFFTRLGQRLIKALDQPTMDGFVYRVDMRLRPFGDSGPLVLSFAALEDYYQEQGRDWERYAMVKARLMGDNDDAWSRELRAMLRPFVFRRYIDFSVIQSLRNMKGMIAREVRRRGLKDNIKLGAGGIREIEFIVQVFQLIRGGREPSLQSRSLLPTLDAIAALHLLPENDVAQLRVAYLFLRRLENLLQSINDEQTQTLPADDLNRARLAWGMKAENWPQLVGELTDHMANVRRVFNELIGDDEADTPQEEERSEPWREVWQDALQEDDSTPVLAHLADEDRRQVLTLIADFRKELDKRPIGPRGRQVLDQLMPHLLADVCSREDAAVTLSRITPLLAGIVTRTTYLELLSEFPGALKHLIMLCAASPMIASQLARYPLLLDELLDPGTLYQPTATDAYRDELRQYLLRVPEEDEEQQLEALRQFKQAQLLRIAAADIAGTLPVMKVSDHLTWLAEAMIDAVVQQAWTQMVARYGQPAHLDERQGRGFAVVGYGKLGGWELGYSSDLDLIFLHDCPMDVMTNGEREIDGRQFYLRLAQRIMHLFSTRTSSGILYEVDARLRPSGAAGMLVTSADAFADYQQHEAWTWEHQALVRARVVYGDPQLTSQFDTVRRTIMTTARDGKTLQTEVREMREKMRAHLGNKHRDRFDIKADEGGITDIEFIAQYLVLRYAHEKPKLTRWSDNVRILELLAQNGIMDEHEAQALTVAYTTLRDELHHLALQELPGHVAQTCFSKERALVQASWRKWLVAV.

An adenylyl removase region spans residues 1-440 (MTPLSSPLSQ…VFNELIGDDE (440 aa)). The interval 450–947 (SEPWREVWQD…ASWRKWLVAV (498 aa)) is adenylyl transferase.

This sequence belongs to the GlnE family. Mg(2+) serves as cofactor.

It carries out the reaction [glutamine synthetase]-O(4)-(5'-adenylyl)-L-tyrosine + phosphate = [glutamine synthetase]-L-tyrosine + ADP. It catalyses the reaction [glutamine synthetase]-L-tyrosine + ATP = [glutamine synthetase]-O(4)-(5'-adenylyl)-L-tyrosine + diphosphate. Involved in the regulation of glutamine synthetase GlnA, a key enzyme in the process to assimilate ammonia. When cellular nitrogen levels are high, the C-terminal adenylyl transferase (AT) inactivates GlnA by covalent transfer of an adenylyl group from ATP to specific tyrosine residue of GlnA, thus reducing its activity. Conversely, when nitrogen levels are low, the N-terminal adenylyl removase (AR) activates GlnA by removing the adenylyl group by phosphorolysis, increasing its activity. The regulatory region of GlnE binds the signal transduction protein PII (GlnB) which indicates the nitrogen status of the cell. This Salmonella enteritidis PT4 (strain P125109) protein is Bifunctional glutamine synthetase adenylyltransferase/adenylyl-removing enzyme.